The primary structure comprises 360 residues: Phosphoserine aminotransferase (360 aa).

R42 is a binding site for L-glutamate. Residues 76 to 77 (AS), W102, T152, D171, and Q194 contribute to the pyridoxal 5'-phosphate site. An N6-(pyridoxal phosphate)lysine modification is found at K195. Pyridoxal 5'-phosphate is bound at residue 236–237 (NT).

It belongs to the class-V pyridoxal-phosphate-dependent aminotransferase family. SerC subfamily. Homodimer. Pyridoxal 5'-phosphate serves as cofactor.

Its subcellular location is the cytoplasm. It catalyses the reaction O-phospho-L-serine + 2-oxoglutarate = 3-phosphooxypyruvate + L-glutamate. The enzyme catalyses 4-(phosphooxy)-L-threonine + 2-oxoglutarate = (R)-3-hydroxy-2-oxo-4-phosphooxybutanoate + L-glutamate. Its pathway is amino-acid biosynthesis; L-serine biosynthesis; L-serine from 3-phospho-D-glycerate: step 2/3. Its function is as follows. Catalyzes the reversible conversion of 3-phosphohydroxypyruvate to phosphoserine and of 3-hydroxy-2-oxo-4-phosphonooxybutanoate to phosphohydroxythreonine. The polypeptide is Phosphoserine aminotransferase (Geobacillus kaustophilus (strain HTA426)).